Here is an 874-residue protein sequence, read N- to C-terminus: Alanine--tRNA ligase (874 aa).

The Zn(2+) site is built by H563, H567, C665, and H669.

The protein belongs to the class-II aminoacyl-tRNA synthetase family. Requires Zn(2+) as cofactor.

It localises to the cytoplasm. It catalyses the reaction tRNA(Ala) + L-alanine + ATP = L-alanyl-tRNA(Ala) + AMP + diphosphate. Its function is as follows. Catalyzes the attachment of alanine to tRNA(Ala) in a two-step reaction: alanine is first activated by ATP to form Ala-AMP and then transferred to the acceptor end of tRNA(Ala). Also edits incorrectly charged Ser-tRNA(Ala) and Gly-tRNA(Ala) via its editing domain. This is Alanine--tRNA ligase from Actinobacillus pleuropneumoniae serotype 3 (strain JL03).